The sequence spans 113 residues: Large ribosomal subunit protein bL20c (113 aa).

This sequence belongs to the bacterial ribosomal protein bL20 family.

It is found in the plastid. It localises to the chloroplast. Its function is as follows. Binds directly to 23S ribosomal RNA and is necessary for the in vitro assembly process of the 50S ribosomal subunit. It is not involved in the protein synthesizing functions of that subunit. This Nephroselmis olivacea (Green alga) protein is Large ribosomal subunit protein bL20c.